The following is a 35-amino-acid chain: AFGTILKALAKIAAKAVKKLATKPGATYMLKQNLE.

Glutamate 35 is subject to Glutamic acid 1-amide.

Expressed by the venom gland.

The protein resides in the secreted. The polypeptide is Cupiennin-2e (Cupiennius salei (American wandering spider)).